Consider the following 99-residue polypeptide: Aspartyl/glutamyl-tRNA(Asn/Gln) amidotransferase subunit C (99 aa).

Belongs to the GatC family. Heterotrimer of A, B and C subunits.

It carries out the reaction L-glutamyl-tRNA(Gln) + L-glutamine + ATP + H2O = L-glutaminyl-tRNA(Gln) + L-glutamate + ADP + phosphate + H(+). The catalysed reaction is L-aspartyl-tRNA(Asn) + L-glutamine + ATP + H2O = L-asparaginyl-tRNA(Asn) + L-glutamate + ADP + phosphate + 2 H(+). Functionally, allows the formation of correctly charged Asn-tRNA(Asn) or Gln-tRNA(Gln) through the transamidation of misacylated Asp-tRNA(Asn) or Glu-tRNA(Gln) in organisms which lack either or both of asparaginyl-tRNA or glutaminyl-tRNA synthetases. The reaction takes place in the presence of glutamine and ATP through an activated phospho-Asp-tRNA(Asn) or phospho-Glu-tRNA(Gln). In Corynebacterium glutamicum (strain R), this protein is Aspartyl/glutamyl-tRNA(Asn/Gln) amidotransferase subunit C.